The chain runs to 175 residues: Large ribosomal subunit protein bL17m (175 aa).

A mitochondrion-targeting transit peptide spans 1–8; that stretch reads MRLSVCAA. The tract at residues 155-175 is disordered; that stretch reads DLSQSQEASNHSSHTAQTPGI. Over residues 157–175 the composition is skewed to polar residues; the sequence is SQSQEASNHSSHTAQTPGI.

This sequence belongs to the bacterial ribosomal protein bL17 family. Component of the mitochondrial ribosome large subunit (39S) which comprises a 16S rRNA and about 50 distinct proteins.

It is found in the mitochondrion. This chain is Large ribosomal subunit protein bL17m (MRPL17), found in Pongo abelii (Sumatran orangutan).